Consider the following 239-residue polypeptide: Short palate, lung and nasal epithelium carcinoma-associated protein 2A (239 aa).

A signal peptide spans 1 to 20 (MVQLWKLVLLCGLLAGTSES). An intrachain disulfide couples Cys166 to Cys209.

It belongs to the BPI/LBP/Plunc superfamily. Plunc family. In terms of tissue distribution, detected in salivary tissues: parotid, submandibular and sublingual glands.

The protein resides in the secreted. The chain is Short palate, lung and nasal epithelium carcinoma-associated protein 2A (SPLUNC2A) from Bos taurus (Bovine).